The sequence spans 630 residues: uncharacterized protein (630 aa).

A run of 2 helical transmembrane segments spans residues 8 to 28 (LFNM…ASAV) and 258 to 278 (VDNS…PLVI). Residues 399 to 426 (EETSKPTEQPSPADSTSTPAAPEKGAAS) form a disordered region. Polar residues predominate over residues 404–417 (PTEQPSPADSTSTP).

Belongs to the peptidase S1C family.

The protein resides in the cell membrane. This is an uncharacterized protein from Sinorhizobium fredii (strain NBRC 101917 / NGR234).